A 321-amino-acid polypeptide reads, in one-letter code: Glutaminase (321 aa).

Residues serine 69, asparagine 120, glutamate 165, asparagine 172, tyrosine 196, tyrosine 248, and valine 266 each coordinate substrate.

The protein belongs to the glutaminase family. Homotetramer.

The catalysed reaction is L-glutamine + H2O = L-glutamate + NH4(+). This chain is Glutaminase, found in Bacteroides fragilis (strain YCH46).